A 123-amino-acid polypeptide reads, in one-letter code: Small ribosomal subunit protein uS13 (123 aa).

A disordered region spans residues 93–123 (HRKGLPVRGQNTKNNARTRKGPAKAIAGKKK). Residues 108–123 (ARTRKGPAKAIAGKKK) show a composition bias toward basic residues.

It belongs to the universal ribosomal protein uS13 family. As to quaternary structure, part of the 30S ribosomal subunit. Forms a loose heterodimer with protein S19. Forms two bridges to the 50S subunit in the 70S ribosome.

Located at the top of the head of the 30S subunit, it contacts several helices of the 16S rRNA. In the 70S ribosome it contacts the 23S rRNA (bridge B1a) and protein L5 of the 50S subunit (bridge B1b), connecting the 2 subunits; these bridges are implicated in subunit movement. Contacts the tRNAs in the A and P-sites. The polypeptide is Small ribosomal subunit protein uS13 (Leuconostoc citreum (strain KM20)).